The following is a 472-amino-acid chain: Glycosyl hydrolase family 109 protein (472 aa).

Positions 1-35 (MSQTPAVSRRLLLGSAAATGALATGIGSAAPVAAA) form a signal peptide, tat-type signal. NAD(+) is bound by residues 68–69 (NR), Asp-90, 139–142 (WEFH), His-145, 159–160 (EL), and Asn-188. Residues Tyr-217, Arg-236, 248–251 (YPMH), and Tyr-330 contribute to the substrate site. Tyr-248 lines the NAD(+) pocket.

This sequence belongs to the Gfo/Idh/MocA family. Glycosyl hydrolase 109 subfamily. NAD(+) is required as a cofactor. Post-translationally, predicted to be exported by the Tat system. The position of the signal peptide cleavage has not been experimentally proven.

In terms of biological role, glycosidase. Has no alpha-N-acetylgalactosaminidase activity. In Streptomyces coelicolor (strain ATCC BAA-471 / A3(2) / M145), this protein is Glycosyl hydrolase family 109 protein.